The primary structure comprises 186 residues: Threonylcarbamoyl-AMP synthase (186 aa).

The YrdC-like domain occupies 5–186; the sequence is LLTIKAAAKL…WEAQTQKRLR (182 aa).

Belongs to the SUA5 family. TsaC subfamily.

Its subcellular location is the cytoplasm. It carries out the reaction L-threonine + hydrogencarbonate + ATP = L-threonylcarbamoyladenylate + diphosphate + H2O. Its function is as follows. Required for the formation of a threonylcarbamoyl group on adenosine at position 37 (t(6)A37) in tRNAs that read codons beginning with adenine. Catalyzes the conversion of L-threonine, HCO(3)(-)/CO(2) and ATP to give threonylcarbamoyl-AMP (TC-AMP) as the acyladenylate intermediate, with the release of diphosphate. The sequence is that of Threonylcarbamoyl-AMP synthase from Hydrogenovibrio crunogenus (strain DSM 25203 / XCL-2) (Thiomicrospira crunogena).